The following is a 172-amino-acid chain: 3-hydroxydecanoyl-[acyl-carrier-protein] dehydratase (172 aa).

His-71 is an active-site residue.

This sequence belongs to the thioester dehydratase family. FabA subfamily. In terms of assembly, homodimer.

Its subcellular location is the cytoplasm. The enzyme catalyses a (3R)-hydroxyacyl-[ACP] = a (2E)-enoyl-[ACP] + H2O. It catalyses the reaction (3R)-hydroxydecanoyl-[ACP] = (2E)-decenoyl-[ACP] + H2O. The catalysed reaction is (2E)-decenoyl-[ACP] = (3Z)-decenoyl-[ACP]. It participates in lipid metabolism; fatty acid biosynthesis. Its function is as follows. Necessary for the introduction of cis unsaturation into fatty acids. Catalyzes the dehydration of (3R)-3-hydroxydecanoyl-ACP to E-(2)-decenoyl-ACP and then its isomerization to Z-(3)-decenoyl-ACP. Can catalyze the dehydratase reaction for beta-hydroxyacyl-ACPs with saturated chain lengths up to 16:0, being most active on intermediate chain length. In Edwardsiella ictaluri (strain 93-146), this protein is 3-hydroxydecanoyl-[acyl-carrier-protein] dehydratase.